Reading from the N-terminus, the 1327-residue chain is Polarized growth protein L1 (1327 aa).

Positions 1–30 (MRESFASLLATGAGKLALSLLFAATPFTSA) are cleaved as a signal peptide. Over 31–1169 (YTFNQVPSPN…FSQQNGKHLA (1139 aa)) the chain is Extracellular. Residues Asn74, Asn90, Asn105, Asn115, Asn132, Asn170, Asn217, Asn224, Asn235, Asn318, Asn342, Asn452, Asn475, Asn601, Asn639, Asn648, and Asn691 are each glycosylated (N-linked (GlcNAc...) asparagine). Residues 595–641 (NLYVAGNFSNNDGRNNIFSFKQGASDPTALPNRGLNRQVMTLYQNDS) form a Kelch 1 repeat. Residues 699–754 (QVLAVSGFFDSVNEFNGNPSTNVQDFAVWVPSRSNWLHNLDFFTLAMSGRLMTFAD) form a Kelch 2 repeat. Residues Asn835, Asn852, Asn877, and Asn931 are each glycosylated (N-linked (GlcNAc...) asparagine). Kelch repeat units lie at residues 945–993 (DVFV…ISDT) and 994–1040 (QMYI…TIAN). N-linked (GlcNAc...) asparagine glycosylation is found at Asn1000, Asn1006, and Asn1126. A helical transmembrane segment spans residues 1170 to 1190 (LWAIVLIGLAIALVLTFLLVV). Over 1191-1327 (AGILLEWYRN…VFDTILACSS (137 aa)) the chain is Cytoplasmic.

Belongs to the RAX2 family.

It localises to the cell membrane. Functionally, has been identified within the cluster that mediates the biosynthesis of squalestatin, but as its expression does not follow that of the other cluster members and it is not conserved in close related clusters, L1 seems not to be involved in the biosynthesis of squalestatin. Probably plays a role as a cell polarity regulator. The sequence is that of Polarized growth protein L1 from Phoma sp. (strain ATCC 20986 / MF5453).